The following is a 1163-amino-acid chain: Putative beta-glucuronidase (1163 aa).

The first 20 residues, 1–20 (MPRFLKYILGLFLISISAFG), serve as a signal peptide directing secretion.

The protein belongs to the glycosyl hydrolase 2 family.

Its subcellular location is the periplasm. The catalysed reaction is a beta-D-glucuronoside + H2O = D-glucuronate + an alcohol. Functionally, glycoside hydrolase involved in ulvan degradation. Ulvan is the main polysaccharide component of the Ulvales (green seaweed) cell wall. It is composed of disaccharide building blocks comprising 3-sulfated rhamnose (Rha3S) linked to D-glucuronic acid (GlcA), L-iduronic acid (IduA), or D-xylose (Xyl). This Formosa agariphila (strain DSM 15362 / KCTC 12365 / LMG 23005 / KMM 3901 / M-2Alg 35-1) protein is Putative beta-glucuronidase.